The primary structure comprises 203 residues: Adenosylcobalamin/alpha-ribazole phosphatase (203 aa).

Catalysis depends on His8, which acts as the Tele-phosphohistidine intermediate. The active-site Proton donor/acceptor is the Glu81.

Belongs to the phosphoglycerate mutase family.

It catalyses the reaction adenosylcob(III)alamin 5'-phosphate + H2O = adenosylcob(III)alamin + phosphate. The enzyme catalyses alpha-ribazole 5'-phosphate + H2O = alpha-ribazole + phosphate. It functions in the pathway nucleoside biosynthesis; alpha-ribazole biosynthesis; alpha-ribazole from 5,6-dimethylbenzimidazole: step 2/2. Functionally, catalyzes the conversion of adenosylcobalamin 5'-phosphate to adenosylcobalamin (vitamin B12); involved in the assembly of the nucleotide loop of cobalamin. Also catalyzes the hydrolysis of the phospho group from alpha-ribazole 5'-phosphate to form alpha-ribazole. In Escherichia coli (strain K12), this protein is Adenosylcobalamin/alpha-ribazole phosphatase (cobC).